The primary structure comprises 502 residues: Probable cytosol aminopeptidase (502 aa).

Positions 265 and 270 each coordinate Mn(2+). Lysine 277 is a catalytic residue. Mn(2+) contacts are provided by aspartate 288, aspartate 347, and glutamate 349. The active site involves arginine 351.

This sequence belongs to the peptidase M17 family. Mn(2+) is required as a cofactor.

The protein localises to the cytoplasm. It catalyses the reaction Release of an N-terminal amino acid, Xaa-|-Yaa-, in which Xaa is preferably Leu, but may be other amino acids including Pro although not Arg or Lys, and Yaa may be Pro. Amino acid amides and methyl esters are also readily hydrolyzed, but rates on arylamides are exceedingly low.. The enzyme catalyses Release of an N-terminal amino acid, preferentially leucine, but not glutamic or aspartic acids.. Presumably involved in the processing and regular turnover of intracellular proteins. Catalyzes the removal of unsubstituted N-terminal amino acids from various peptides. This chain is Probable cytosol aminopeptidase, found in Rickettsia bellii (strain OSU 85-389).